Reading from the N-terminus, the 1165-residue chain is ATP-dependent helicase/deoxyribonuclease subunit B (1165 aa).

Positions 1–298 (MALRFILGRA…AHLEREFFRR (298 aa)) constitute a UvrD-like helicase ATP-binding domain. 8 to 15 (GRAGTGKT) serves as a coordination point for ATP. The UvrD-like helicase C-terminal domain occupies 279-584 (PARFRANPAL…QLALIPPALD (306 aa)). Residues Cys-800, Cys-1119, Cys-1122, and Cys-1128 each coordinate [4Fe-4S] cluster.

It belongs to the helicase family. AddB/RexB type 1 subfamily. Heterodimer of AddA and AddB. Requires Mg(2+) as cofactor. [4Fe-4S] cluster is required as a cofactor.

In terms of biological role, the heterodimer acts as both an ATP-dependent DNA helicase and an ATP-dependent, dual-direction single-stranded exonuclease. Recognizes the chi site generating a DNA molecule suitable for the initiation of homologous recombination. The AddB subunit has 5' -&gt; 3' nuclease activity but not helicase activity. This chain is ATP-dependent helicase/deoxyribonuclease subunit B, found in Desulforudis audaxviator (strain MP104C).